Consider the following 202-residue polypeptide: Translation initiation factor IF-3 (202 aa).

The protein belongs to the IF-3 family. In terms of assembly, monomer.

Its subcellular location is the cytoplasm. IF-3 binds to the 30S ribosomal subunit and shifts the equilibrium between 70S ribosomes and their 50S and 30S subunits in favor of the free subunits, thus enhancing the availability of 30S subunits on which protein synthesis initiation begins. This is Translation initiation factor IF-3 from Prochlorococcus marinus (strain MIT 9211).